We begin with the raw amino-acid sequence, 181 residues long: Adenine phosphoribosyltransferase (181 aa).

Belongs to the purine/pyrimidine phosphoribosyltransferase family. As to quaternary structure, homodimer.

The protein resides in the cytoplasm. It catalyses the reaction AMP + diphosphate = 5-phospho-alpha-D-ribose 1-diphosphate + adenine. Its pathway is purine metabolism; AMP biosynthesis via salvage pathway; AMP from adenine: step 1/1. Catalyzes a salvage reaction resulting in the formation of AMP, that is energically less costly than de novo synthesis. This Methylobacterium radiotolerans (strain ATCC 27329 / DSM 1819 / JCM 2831 / NBRC 15690 / NCIMB 10815 / 0-1) protein is Adenine phosphoribosyltransferase.